Reading from the N-terminus, the 241-residue chain is Uridylate kinase (241 aa).

15-18 (KLSG) is an ATP binding site. The interval 23 to 28 (GTEGFG) is involved in allosteric activation by GTP. Gly-57 lines the UMP pocket. ATP contacts are provided by Gly-58 and Arg-62. UMP-binding positions include Asp-77 and 138–145 (TGNPFFTT). Residues Thr-165, Phe-171, and Asp-174 each coordinate ATP.

The protein belongs to the UMP kinase family. In terms of assembly, homohexamer.

It localises to the cytoplasm. It catalyses the reaction UMP + ATP = UDP + ADP. It functions in the pathway pyrimidine metabolism; CTP biosynthesis via de novo pathway; UDP from UMP (UMPK route): step 1/1. Its activity is regulated as follows. Allosterically activated by GTP. Inhibited by UTP. Its function is as follows. Catalyzes the reversible phosphorylation of UMP to UDP. The protein is Uridylate kinase of Escherichia coli O139:H28 (strain E24377A / ETEC).